Consider the following 762-residue polypeptide: Phosphoribosylformylglycinamidine synthase subunit PurL (762 aa).

Histidine 58 is a catalytic residue. ATP-binding residues include tyrosine 61 and arginine 105. Glutamate 107 contributes to the Mg(2+) binding site. Substrate-binding positions include serine 108–histidine 111 and arginine 130. Histidine 109 acts as the Proton acceptor in catalysis. Residue aspartate 131 participates in Mg(2+) binding. Residue glutamine 255 participates in substrate binding. Aspartate 283 provides a ligand contact to Mg(2+). Glutamate 327–glutamine 329 provides a ligand contact to substrate. Positions 513 and 550 each coordinate ATP. A Mg(2+)-binding site is contributed by asparagine 551. Serine 553 contacts substrate.

This sequence belongs to the FGAMS family. Monomer. Part of the FGAM synthase complex composed of 1 PurL, 1 PurQ and 2 PurS subunits.

The protein localises to the cytoplasm. The catalysed reaction is N(2)-formyl-N(1)-(5-phospho-beta-D-ribosyl)glycinamide + L-glutamine + ATP + H2O = 2-formamido-N(1)-(5-O-phospho-beta-D-ribosyl)acetamidine + L-glutamate + ADP + phosphate + H(+). The protein operates within purine metabolism; IMP biosynthesis via de novo pathway; 5-amino-1-(5-phospho-D-ribosyl)imidazole from N(2)-formyl-N(1)-(5-phospho-D-ribosyl)glycinamide: step 1/2. Functionally, part of the phosphoribosylformylglycinamidine synthase complex involved in the purines biosynthetic pathway. Catalyzes the ATP-dependent conversion of formylglycinamide ribonucleotide (FGAR) and glutamine to yield formylglycinamidine ribonucleotide (FGAM) and glutamate. The FGAM synthase complex is composed of three subunits. PurQ produces an ammonia molecule by converting glutamine to glutamate. PurL transfers the ammonia molecule to FGAR to form FGAM in an ATP-dependent manner. PurS interacts with PurQ and PurL and is thought to assist in the transfer of the ammonia molecule from PurQ to PurL. In Corynebacterium glutamicum (strain ATCC 13032 / DSM 20300 / JCM 1318 / BCRC 11384 / CCUG 27702 / LMG 3730 / NBRC 12168 / NCIMB 10025 / NRRL B-2784 / 534), this protein is Phosphoribosylformylglycinamidine synthase subunit PurL.